The sequence spans 712 residues: Cyclomaltodextrin glucanotransferase (712 aa).

The signal sequence occupies residues 1-27 (MKRFMKLTAVWTLWLSLTLGLLSPVHA). Residues 28–165 (APDTSVSNKQ…NIKVIIDFAP (138 aa)) form an A1 region. The Ca(2+) site is built by aspartate 54, asparagine 56, asparagine 59, and asparagine 60. A disulfide bridge links cysteine 70 with cysteine 77. Ca(2+) contacts are provided by glycine 78 and aspartate 80. Residue 127–128 (YW) participates in substrate binding. Asparagine 166 is a Ca(2+) binding site. A b region spans residues 166–229 (NHTSPASSDD…NLYDLADLNH (64 aa)). Histidine 167 provides a ligand contact to substrate. Isoleucine 217 contacts Ca(2+). 220–223 (NLYD) contacts substrate. A Ca(2+)-binding site is contributed by aspartate 226. The tract at residues 230–433 (NNSSVDVYLK…LRKSNPAIAY (204 aa)) is A2. Arginine 254 provides a ligand contact to substrate. Aspartate 256 acts as the Nucleophile in catalysis. 259–260 (KH) serves as a coordination point for substrate. Ca(2+) is bound at residue histidine 260. Catalysis depends on glutamate 284, which acts as the Proton donor. Substrate is bound by residues histidine 354, aspartate 398, and arginine 402. The c stretch occupies residues 434 to 522 (GSTQERWINN…GTAVWQYTTD (89 aa)). Residues 523-608 (ATAPINGNVG…SNIYDNFEVL (86 aa)) are d. Positions 526-606 (PINGNVGPMM…AASNIYDNFE (81 aa)) constitute an IPT/TIG domain. One can recognise a CBM20 domain in the interval 607–712 (VLTGDQVTVR…TATVNVNWQP (106 aa)). Residues 609–712 (TGDQVTVRFV…TATVNVNWQP (104 aa)) are e.

Belongs to the glycosyl hydrolase 13 family. As to quaternary structure, monomer. The cofactor is Ca(2+).

Its subcellular location is the secreted. The catalysed reaction is Cyclizes part of a (1-&gt;4)-alpha-D-glucan chain by formation of a (1-&gt;4)-alpha-D-glucosidic bond.. The chain is Cyclomaltodextrin glucanotransferase (cgt) from Bacillus sp. (strain 38-2).